Reading from the N-terminus, the 185-residue chain is Threonylcarbamoyl-AMP synthase (185 aa).

A YrdC-like domain is found at 4–185 (SFRAQCAARV…LVTGQVIRPA (182 aa)).

It belongs to the SUA5 family. TsaC subfamily.

The protein resides in the cytoplasm. The catalysed reaction is L-threonine + hydrogencarbonate + ATP = L-threonylcarbamoyladenylate + diphosphate + H2O. Functionally, required for the formation of a threonylcarbamoyl group on adenosine at position 37 (t(6)A37) in tRNAs that read codons beginning with adenine. Catalyzes the conversion of L-threonine, HCO(3)(-)/CO(2) and ATP to give threonylcarbamoyl-AMP (TC-AMP) as the acyladenylate intermediate, with the release of diphosphate. In Pseudomonas aeruginosa (strain UCBPP-PA14), this protein is Threonylcarbamoyl-AMP synthase.